A 379-amino-acid chain; its full sequence is Cathepsin B-like protease 1 (379 aa).

An N-terminal signal peptide occupies residues 1-30 (MADSCCIRLHLLASVFLLLFSSFNLQGIAA). Residues 31–102 (ENLSKQKLTS…PIVRHDLSLK (72 aa)) constitute a propeptide, activation peptide. N-linked (GlcNAc...) asparagine glycans are attached at residues Asn-32 and Asn-69. Cystine bridges form between Cys-116–Cys-165, Cys-148–Cys-191, Cys-182–Cys-236, Cys-183–Cys-187, Cys-213–Cys-240, and Cys-222–Cys-227. Cys-151 is a catalytic residue. Residue Asn-171 is glycosylated (N-linked (GlcNAc...) asparagine). Residues His-306 and Asn-327 contribute to the active site. The N-linked (GlcNAc...) asparagine glycan is linked to Asn-330. Positions 363–379 (NVFKGITTSDDLLVSSV) are cleaved as a propeptide — removed in mature form.

The protein belongs to the peptidase C1 family.

Its function is as follows. Thiol protease that plays a central role in plant programmed cell death (PCD). In addition to its role in protein degradation, may cleave and/or degrade a number of target proteins, activating signaling towards PCD. Contributes to the increase of caspase-3-like activity after UV-C-induced PCD and is required for abiotic stress-induced PCD. Functions redundantly with CATHB2 and CATHB3 in basal defense and distinct forms of plant programmed cell death (PCD). Participates in the establishment of basal resistance against the bacterial pathogen Pseudomonase syringae pv. tomato DC3000. Required for full levels of PCD during resistance (R) gene-mediated hypersensitive response (HR). Involved in the regulation of senescence, a developmental form of PCD in plants. The polypeptide is Cathepsin B-like protease 1 (Arabidopsis thaliana (Mouse-ear cress)).